The following is a 429-amino-acid chain: Enolase (429 aa).

Position 162 (Gln-162) interacts with (2R)-2-phosphoglycerate. The Proton donor role is filled by Glu-204. 3 residues coordinate Mg(2+): Asp-241, Glu-286, and Asp-313. Positions 338, 367, 368, and 389 each coordinate (2R)-2-phosphoglycerate. The Proton acceptor role is filled by Lys-338.

The protein belongs to the enolase family. It depends on Mg(2+) as a cofactor.

Its subcellular location is the cytoplasm. It is found in the secreted. The protein localises to the cell surface. The catalysed reaction is (2R)-2-phosphoglycerate = phosphoenolpyruvate + H2O. It functions in the pathway carbohydrate degradation; glycolysis; pyruvate from D-glyceraldehyde 3-phosphate: step 4/5. Functionally, catalyzes the reversible conversion of 2-phosphoglycerate (2-PG) into phosphoenolpyruvate (PEP). It is essential for the degradation of carbohydrates via glycolysis. This chain is Enolase, found in Halalkalibacterium halodurans (strain ATCC BAA-125 / DSM 18197 / FERM 7344 / JCM 9153 / C-125) (Bacillus halodurans).